Consider the following 354-residue polypeptide: Lipoyl synthase, mitochondrial (354 aa).

[4Fe-4S] cluster contacts are provided by Cys91, Cys96, Cys102, Cys122, Cys126, Cys129, and Ser337. The Radical SAM core domain maps to 107 to 326 (DDSLATATIM…AEYSKKLGFL (220 aa)).

It belongs to the radical SAM superfamily. Lipoyl synthase family. The cofactor is [4Fe-4S] cluster.

It is found in the mitochondrion. It carries out the reaction [[Fe-S] cluster scaffold protein carrying a second [4Fe-4S](2+) cluster] + N(6)-octanoyl-L-lysyl-[protein] + 2 oxidized [2Fe-2S]-[ferredoxin] + 2 S-adenosyl-L-methionine + 4 H(+) = [[Fe-S] cluster scaffold protein] + N(6)-[(R)-dihydrolipoyl]-L-lysyl-[protein] + 4 Fe(3+) + 2 hydrogen sulfide + 2 5'-deoxyadenosine + 2 L-methionine + 2 reduced [2Fe-2S]-[ferredoxin]. Its pathway is protein modification; protein lipoylation via endogenous pathway; protein N(6)-(lipoyl)lysine from octanoyl-[acyl-carrier-protein]: step 2/2. Its function is as follows. Catalyzes the radical-mediated insertion of two sulfur atoms into the C-6 and C-8 positions of the octanoyl moiety bound to the lipoyl domains of lipoate-dependent enzymes, thereby converting the octanoylated domains into lipoylated derivatives. The polypeptide is Lipoyl synthase, mitochondrial (Caenorhabditis elegans).